Here is a 503-residue protein sequence, read N- to C-terminus: Maturase K (503 aa).

This sequence belongs to the intron maturase 2 family. MatK subfamily.

The protein resides in the plastid. Its subcellular location is the chloroplast. In terms of biological role, usually encoded in the trnK tRNA gene intron. Probably assists in splicing its own and other chloroplast group II introns. In Liquidambar orientalis (Oriental sweet gum), this protein is Maturase K.